Here is a 223-residue protein sequence, read N- to C-terminus: 3,4-dihydroxy-2-butanone 4-phosphate synthase (223 aa).

Residues 39–40 (RE), Asp-44, 152–156 (RRGHT), and Glu-176 contribute to the D-ribulose 5-phosphate site. Glu-40 lines the Mg(2+) pocket. His-155 is a Mg(2+) binding site.

This sequence belongs to the DHBP synthase family. In terms of assembly, homodimer. Mg(2+) is required as a cofactor. It depends on Mn(2+) as a cofactor.

The enzyme catalyses D-ribulose 5-phosphate = (2S)-2-hydroxy-3-oxobutyl phosphate + formate + H(+). It functions in the pathway cofactor biosynthesis; riboflavin biosynthesis; 2-hydroxy-3-oxobutyl phosphate from D-ribulose 5-phosphate: step 1/1. Its function is as follows. Catalyzes the conversion of D-ribulose 5-phosphate to formate and 3,4-dihydroxy-2-butanone 4-phosphate. The chain is 3,4-dihydroxy-2-butanone 4-phosphate synthase from Desulfovibrio desulfuricans (strain ATCC 27774 / DSM 6949 / MB).